The chain runs to 187 residues: Protein GrpE (187 aa).

Positions 1 to 30 are disordered; the sequence is MEKKETKSESEKTNKQDNKNTKSQKKENLN.

The protein belongs to the GrpE family. As to quaternary structure, homodimer.

It is found in the cytoplasm. In terms of biological role, participates actively in the response to hyperosmotic and heat shock by preventing the aggregation of stress-denatured proteins, in association with DnaK and GrpE. It is the nucleotide exchange factor for DnaK and may function as a thermosensor. Unfolded proteins bind initially to DnaJ; upon interaction with the DnaJ-bound protein, DnaK hydrolyzes its bound ATP, resulting in the formation of a stable complex. GrpE releases ADP from DnaK; ATP binding to DnaK triggers the release of the substrate protein, thus completing the reaction cycle. Several rounds of ATP-dependent interactions between DnaJ, DnaK and GrpE are required for fully efficient folding. This Borreliella burgdorferi (strain ATCC 35210 / DSM 4680 / CIP 102532 / B31) (Borrelia burgdorferi) protein is Protein GrpE.